The chain runs to 312 residues: MNILSQTQILHLSIAILLFITTSSSSLSPSSSSPSLSPSPPSSSPSSAPPSSLSPSSPPPLSLSPSSPPPPPPSSSPLSSLSPSLSPSPPSSSPSSAPPSSLSPSSPPPLSLSPSSPPPPPPSSSPLSSLSPSSSSSTYSNQTNLDYIKTSCNITLYKTICYNSLSPYASTIRSNPQKLAVIALNLTLSSAKSASKFVKNISHGGGLTRLEVVAVADCVEEIGDSVTSLQDSIRELDSINYKDSAKFEMVMSDVETWVSAALTNDDTCMDGFSLVKTAVKDLVRRHVVEVARLTSNALALINMYASTQENFS.

Positions 1-25 are cleaved as a signal peptide; that stretch reads MNILSQTQILHLSIAILLFITTSSS. Low complexity-rich tracts occupy residues 24 to 36 and 44 to 55; these read SSSL…SPSL and SPSSAPPSSLSP. The tract at residues 24-141 is disordered; the sequence is SSSLSPSSSS…PSSSSSTYSN (118 aa). Pro residues predominate over residues 56–75; sequence SSPPPLSLSPSSPPPPPPSS. Composition is skewed to low complexity over residues 76–85 and 93–104; these read SPLSSLSPSL and SPSSAPPSSLSP. Pro residues predominate over residues 105 to 124; it reads SSPPPLSLSPSSPPPPPPSS. Over residues 125–137 the composition is skewed to low complexity; sequence SPLSSLSPSSSSS. 4 N-linked (GlcNAc...) asparagine glycosylation sites follow: Asn-141, Asn-153, Asn-185, and Asn-200. Residues Cys-152 and Cys-161 are joined by a disulfide bond. Cys-218 and Cys-268 are joined by a disulfide.

It belongs to the PMEI family.

The protein resides in the secreted. It localises to the extracellular space. It is found in the apoplast. Functionally, pectin methylesterase (PME) inhibitor involved in the maintenance of cell wall integrity in response to necrotrophic pathogens. Modulates PME activity and pectin methylesterification during infection by Botrytis cinerea and contributes to resistance against the pathogen. This is Pectinesterase inhibitor 10 from Arabidopsis thaliana (Mouse-ear cress).